The primary structure comprises 147 residues: Large ribosomal subunit protein uL13 (147 aa).

The protein belongs to the universal ribosomal protein uL13 family. As to quaternary structure, part of the 50S ribosomal subunit.

This protein is one of the early assembly proteins of the 50S ribosomal subunit, although it is not seen to bind rRNA by itself. It is important during the early stages of 50S assembly. The polypeptide is Large ribosomal subunit protein uL13 (Rhodococcus erythropolis (strain PR4 / NBRC 100887)).